An 872-amino-acid polypeptide reads, in one-letter code: Alanine--tRNA ligase (872 aa).

Residues histidine 567, histidine 571, cysteine 669, and histidine 673 each coordinate Zn(2+).

This sequence belongs to the class-II aminoacyl-tRNA synthetase family. Requires Zn(2+) as cofactor.

The protein localises to the cytoplasm. It catalyses the reaction tRNA(Ala) + L-alanine + ATP = L-alanyl-tRNA(Ala) + AMP + diphosphate. Functionally, catalyzes the attachment of alanine to tRNA(Ala) in a two-step reaction: alanine is first activated by ATP to form Ala-AMP and then transferred to the acceptor end of tRNA(Ala). Also edits incorrectly charged Ser-tRNA(Ala) and Gly-tRNA(Ala) via its editing domain. This is Alanine--tRNA ligase from Streptococcus pyogenes serotype M12 (strain MGAS2096).